The chain runs to 408 residues: Arginine biosynthesis bifunctional protein ArgJ (408 aa).

Positions 158, 184, 195, 281, 403, and 408 each coordinate substrate. Residue Thr-195 is the Nucleophile of the active site.

It belongs to the ArgJ family. Heterotetramer of two alpha and two beta chains.

It is found in the cytoplasm. It catalyses the reaction N(2)-acetyl-L-ornithine + L-glutamate = N-acetyl-L-glutamate + L-ornithine. The catalysed reaction is L-glutamate + acetyl-CoA = N-acetyl-L-glutamate + CoA + H(+). It functions in the pathway amino-acid biosynthesis; L-arginine biosynthesis; L-ornithine and N-acetyl-L-glutamate from L-glutamate and N(2)-acetyl-L-ornithine (cyclic): step 1/1. Its pathway is amino-acid biosynthesis; L-arginine biosynthesis; N(2)-acetyl-L-ornithine from L-glutamate: step 1/4. Its function is as follows. Catalyzes two activities which are involved in the cyclic version of arginine biosynthesis: the synthesis of N-acetylglutamate from glutamate and acetyl-CoA as the acetyl donor, and of ornithine by transacetylation between N(2)-acetylornithine and glutamate. This chain is Arginine biosynthesis bifunctional protein ArgJ, found in Shouchella clausii (strain KSM-K16) (Alkalihalobacillus clausii).